Consider the following 95-residue polypeptide: Small ribosomal subunit protein bS6 (95 aa).

It belongs to the bacterial ribosomal protein bS6 family.

Binds together with bS18 to 16S ribosomal RNA. This is Small ribosomal subunit protein bS6 from Clostridium acetobutylicum (strain ATCC 824 / DSM 792 / JCM 1419 / IAM 19013 / LMG 5710 / NBRC 13948 / NRRL B-527 / VKM B-1787 / 2291 / W).